The sequence spans 168 residues: Glycine-rich RNA-binding protein 2 (168 aa).

Residues 8-86 (YRCFVGGLAW…RNITVNQAQS (79 aa)) form the RRM domain. The disordered stretch occupies residues 148 to 168 (GYGGGGGYGGNRGDSGGNWRN).

Possibly has a role in RNA transcription or processing during stress. The chain is Glycine-rich RNA-binding protein 2 (GRP2) from Sorghum bicolor (Sorghum).